A 280-amino-acid chain; its full sequence is Protoheme IX farnesyltransferase (280 aa).

The next 9 helical transmembrane spans lie at 2–21, 30–50, 83–103, 105–125, 131–151, 160–180, 206–226, 229–249, and 260–280; these read VVAT…RAGL, AAVP…VVSG, LALW…LVGV, ATTG…YTPL, LSLP…WTSV, FLLF…ISLF, IVGY…LGVA, VYLG…VYGL, and QVFF…MIGA.

The protein belongs to the UbiA prenyltransferase family. Protoheme IX farnesyltransferase subfamily.

It is found in the cell inner membrane. It carries out the reaction heme b + (2E,6E)-farnesyl diphosphate + H2O = Fe(II)-heme o + diphosphate. It functions in the pathway porphyrin-containing compound metabolism; heme O biosynthesis; heme O from protoheme: step 1/1. Its function is as follows. Converts heme B (protoheme IX) to heme O by substitution of the vinyl group on carbon 2 of heme B porphyrin ring with a hydroxyethyl farnesyl side group. This is Protoheme IX farnesyltransferase from Sorangium cellulosum (strain So ce56) (Polyangium cellulosum (strain So ce56)).